The primary structure comprises 546 residues: CCA tRNA nucleotidyltransferase, mitochondrial (546 aa).

It belongs to the tRNA nucleotidyltransferase/poly(A) polymerase family.

The protein resides in the mitochondrion. The protein localises to the cytoplasm. Its subcellular location is the nucleus. It carries out the reaction a tRNA precursor + 2 CTP + ATP = a tRNA with a 3' CCA end + 3 diphosphate. Its function is as follows. Nucleotidyltransferase that catalyzes the addition and repair of the essential 3'-terminal CCA sequence in tRNAs, which is necessary for the attachment of amino acids to the 3' terminus of tRNA molecules, using CTP and ATP as substrates. tRNA 3'-terminal CCA addition is required both for tRNA processing and repair. Also involved in tRNA surveillance by mediating tandem CCA addition to generate a CCACCA at the 3' terminus of unstable tRNAs. While stable tRNAs receive only 3'-terminal CCA, unstable tRNAs are marked with CCACCA and rapidly degraded. The structural flexibility of RNA controls the choice between CCA versus CCACCA addition: following the first CCA addition cycle, nucleotide-binding to the active site triggers a clockwise screw motion, producing torque on the RNA. This ejects stable RNAs, whereas unstable RNAs are refolded while bound to the enzyme and subjected to a second CCA catalytic cycle. In Saccharomyces cerevisiae (strain ATCC 204508 / S288c) (Baker's yeast), this protein is CCA tRNA nucleotidyltransferase, mitochondrial (CCA1).